The following is a 120-amino-acid chain: NAD(P)H-quinone oxidoreductase subunit 3 (120 aa).

3 helical membrane passes run 1-21, 64-84, and 89-109; these read MFVL…SLVP, MFAL…PWAV, and LGLL…VALV.

This sequence belongs to the complex I subunit 3 family. As to quaternary structure, NDH-1 can be composed of about 15 different subunits; different subcomplexes with different compositions have been identified which probably have different functions.

The protein localises to the cellular thylakoid membrane. It catalyses the reaction a plastoquinone + NADH + (n+1) H(+)(in) = a plastoquinol + NAD(+) + n H(+)(out). The enzyme catalyses a plastoquinone + NADPH + (n+1) H(+)(in) = a plastoquinol + NADP(+) + n H(+)(out). Functionally, NDH-1 shuttles electrons from an unknown electron donor, via FMN and iron-sulfur (Fe-S) centers, to quinones in the respiratory and/or the photosynthetic chain. The immediate electron acceptor for the enzyme in this species is believed to be plastoquinone. Couples the redox reaction to proton translocation, and thus conserves the redox energy in a proton gradient. Cyanobacterial NDH-1 also plays a role in inorganic carbon-concentration. This chain is NAD(P)H-quinone oxidoreductase subunit 3, found in Trichormus variabilis (strain ATCC 29413 / PCC 7937) (Anabaena variabilis).